The following is a 584-amino-acid chain: Proteasome-associated ATPase (584 aa).

Residues 16 to 91 (EELASQVRLL…KEEVDRLAQP (76 aa)) are a coiled coil. An ATP-binding site is contributed by 273 to 278 (GCGKTL). Residues 583–584 (YL) form a docks into pockets in the proteasome alpha-ring region.

This sequence belongs to the AAA ATPase family. As to quaternary structure, homohexamer. Assembles into a hexameric ring structure that caps the 20S proteasome core. Strongly interacts with the prokaryotic ubiquitin-like protein Pup through a hydrophobic interface; the interacting region of ARC lies in its N-terminal coiled-coil domain. There is one Pup binding site per ARC hexamer ring. Upon ATP-binding, the C-terminus of ARC interacts with the alpha-rings of the proteasome core, possibly by binding to the intersubunit pockets.

It participates in protein degradation; proteasomal Pup-dependent pathway. Functionally, ATPase which is responsible for recognizing, binding, unfolding and translocation of pupylated proteins into the bacterial 20S proteasome core particle. May be essential for opening the gate of the 20S proteasome via an interaction with its C-terminus, thereby allowing substrate entry and access to the site of proteolysis. Thus, the C-termini of the proteasomal ATPase may function like a 'key in a lock' to induce gate opening and therefore regulate proteolysis. This chain is Proteasome-associated ATPase, found in Nocardioides sp. (strain ATCC BAA-499 / JS614).